Consider the following 205-residue polypeptide: Urease accessory protein UreE (205 aa).

Over residues 171-192 (HHGHSHSHDHDHDHDHDHDHQH) the composition is skewed to basic and acidic residues. The segment at 171–205 (HHGHSHSHDHDHDHDHDHDHQHGPCCSHGHHHGHR) is disordered.

Belongs to the UreE family.

The protein resides in the cytoplasm. Functionally, involved in urease metallocenter assembly. Binds nickel. Probably functions as a nickel donor during metallocenter assembly. This chain is Urease accessory protein UreE, found in Burkholderia pseudomallei (strain K96243).